The primary structure comprises 399 residues: Transferrin receptor subunit ESAG6 (399 aa).

The N-terminal stretch at Met-1 to Ala-17 is a signal peptide. Asn-26 and Asn-110 each carry an N-linked (GlcNAc...) asparagine glycan. 3 disulfide bridges follow: Cys-34/Cys-161, Cys-84/Cys-312, and Cys-144/Cys-215. 3 N-linked (GlcNAc...) asparagine glycosylation sites follow: Asn-235, Asn-250, and Asn-360. A lipid anchor (GPI-anchor amidated asparagine) is attached at Asn-376. The propeptide at Ala-377 to Leu-399 is removed in mature form.

As to quaternary structure, heterodimer composed of ESAG6 and ESAG7. N-glycosylated. Glycosylation is dispensable for heterodimer formation and host transferrin binding.

Its subcellular location is the cell membrane. The protein resides in the flagellar pocket. In terms of biological role, transferrin receptor subunit involved in receptor-mediated acquisition of iron from the environment by binding host TF/transferrin. This Trypanosoma brucei brucei protein is Transferrin receptor subunit ESAG6.